The primary structure comprises 5571 residues: MSVPPPGATPSRTSRTKGLKDRPRMENEEKLVEYLKRATTDLRQARRRLREVEDQQQEPVAIIGMSCRYPGDVHSPDDLWRMVADGDDGISTFPAERGWDVERLYDPDPDRPGTTYTTRGGFLHDAHLFDAEFFGISPREALATDPQQRLLLETSWEAFERAGIDPTSLRGSHTGVFAGVMYQDYAHRVRPVPEEFEGYLGNGSAGSIASGRVAYTFGLEGPAVTVDTACSSSLVALHLAVQSLRQGDSTLALAGGVAIMSTPDVFVEYSRQRGLAADGRCKAFAEAADGTGWAEGVGMLLLERLSDARRNGHPVLAVVRGSAVNQDGASSRLTAPNGPSQQRVIRQALANARLTPADVDVVEAHGTGTKLGDPIEAQALLATYGQDRPAERPLWLGSLKSNIGHTQAAAGVGGVIKMVMAIRHGVAPRTLHVDRPTPEVDWSAGAVELLTEARPWPETDRPRRAGVSAFGVSGTNAHVIIEQPPAIEGTGLGDDAPPTAEHPEERTPADGGPAPQPVAWPLSAKSPEALRDQARQLRHHLTSGATASALSHPLADIGHSLATTRTAFDHRVVVLGTDHDALLRSLAALADGGTDPSVVQGSVRGRGRVAFVFPGQGSQWEGMARELLDTSPVFARQMQACADALSAYVDWSLHDVLRGAPDAPGLDRVDVVQPVLWAIMISLSELWRAHGVQPSAVVGHSQGEIAAAYVAGALSLDDSARVVALRSKALRALSGKGGMLSVPLSEEDLTPQLAAHTGQLSIAAVNGPGSVVVSGDADALEGLFEELTAAGVRARKVAVDYASHSAHVEALREELLTRLGPVAPRPAKVPFYSTVTGERLAGTEALDADYWYRNLRETVRFEQATRALLAQNIGVFVETGPHPVLAVGLQETIDATGGSAVALGSLRRGEGGPDRFLRSLAEAYAHGAPLDWDLLFPGARRVELPTYAFQRDHYWLQIPEGGPADAAGLGLAAVEHPLLAAATSLADGDGLIVTGRLSTRSLPWLADHAVTGTVLLPGTAFVELALRAADLTDCHLLDELTLHTPLVVPDDDPVRVQVRVAAPDPATGRRALTVHARPESPDGDADQEEQGAEWTLHATGYLAVGAHEPAVPDQGQWPPAGATPLDVTDLYPRLADAGYGYGLAFQGLRAAWRLGDDVYAEAELPDEHSDQAGRYGLHPALLDAALHAAGFAGFPDGDGALPGPRLPFSWTGVTLSAVGARALRIRLARTGDDTLTVTLTDPAGEPVATVESLALRPLATNQAPRTPSDLHRVAYTPRDLPADASTAHWAVLDADDLAYALNLPSHPDRDALAALDPAPPVVLTGWPVPDDPAPQAARTVLARALHDIQDWLADDRLADTRLVVVTHNALPADDWQDTDPVAASLTGLLRTAQSENPGRLVLIDTDGHPASWQALPALVATGEPQAALRLGEARVPRLAPAATDAALSVPAAVPAATDASLPVPADTSAWRLAVESPGTLDHLTLIPWAAATAPLEEGQVRIAVRTCGVNFRDVLIALGMYPDPDMLGSEGAGRVVEVGPGVTDLAVGDRVAGILAGGFGPLAVIDAPKVARIPDSWTWEQAASVPLAFATAWYALVDLAALAPGEKVLVHAAAGGVGMAAVQIARHLGAEVYATASPAKWDTLRALGLDDDHIASSRDTAFAEKFPAVDVVLDSLAGEFVDASLRLLPHGGRFVEMGKTDRRDPERIAADHPGVHYRAFDLRESGDRRLREMLDEIFALVEDGTLHPLPYRSWDLRRAPEAFRHMQQARHIGKIVLTVPPALDPDGTVLVTGATGTLGALVTRHLVTEHGVRRLLLVSRSGPQAPGADALLADLAAAGAEATLTACDTADRDQLRAVLDAVPADHPLTAVIHTAGALDDGVLSALTPERLDAVLRPKADAAWHLHELTAGHDLAAFVLFSSAAGLFGNAGQGNYAAANAFLDALAQHRRALGLPATSLAWGLWEERGGMTGHLDTADVGRLSRTGVATLDSAHGLALFDAALSTGQTLLVPLPLDRAALHRQARTGSLPALLSGLVRTTPARRTATGTAATGSVGDTLARRLTAAAPADRDRIVNDLVRDHAAAVLGHGSATAVGLGRAFRDLGFDSLTAVELRNRLGAATGLRLPATLVFDHPTPEELAAHLRDTLLGAADSGAAAVVTTSAEADEPLAVVAMSCRFPGGTGSPEELWELLADGGDAIGALPADRGWDLAGLYHPDPDQPGTSYARHGGFLHDAGDFDASLFGISPREALAMDPQQRLLLETSWEAFERAGLDLRTLRGSRTGVYVGALPSSYGGTLHDAPDGLEGHLMTGNSTSIVSGRLAYTFGLQGPAVTVDTACSSSLVALHLAVQALRSGEVTMALVGGATVMSNPGGLIAFSRQRGLAADGRCKAFSAAADGMGMAEGVGMLLVERLSDAERLGHPVLAVVRGSAINQDGASNGLTAPNGPSQQRVIRDALADARLNASEVDVVEAHGTGTKLGDPIEAQALLATYGQDRPEERPVLLGSVKSNIGHTQAAAGVAGVIKMVLAMRHGLLPRTLHVDEPSTQIDWNAGALSLLAEETPWPETGRPRRAAVSSFGISGTNAHVILEQAPASVPAPASASVPGDSGEAPDPVVVPWVVSGRSADALRAQAGQLAAWADSAAGRDTEPVDVGRALATARSFLEHRAVVVGGDRAELVEALRALATDPAAGSTAADPDGPGGRLGLVFSGQGSQRPGMGRELYTAYPVFAAALDEVCGVLDEVMGAQPPSEGWTGSLREVMFEVSSDLLDETGFTQPALFAFEVALYRLLESWGVAGEVVAGHSVGEIAAAHVAGVLSLADACALVAARGRLMQALPSGGAMVAVEASEEEVAAVLAGRGDEGAGIGAVNAPGSVVVSGVEAAVEEVAARFAGLGRRTRRLKVSHAFHSPLMDPMLAEFRRVVEGLSFAPPRMTVVSTLTGAVASDEELCSVDYWVRHARETVRFGDAVRCMAGAEVDRFAEVGPSGVLAGLVRASVTGEGTRAAVALQRGNRTEPGALVSALGELFVSGLPVDWATYFAGRPLRRVELPTYAFQRARYWLEGAAGAGGRQSAADGQDEVDAAFWEAVEHGDLSALGAGLDVDGEARLADVLPALSSWRRRAEQASVVDAWRYRVTWAPLPEPARASATGVWLLLVPAGAEDAADATRTVEGALAEHGGEVVKVDVAHPEADEARTALAQQITEQFIERFGVTEIGRLRGVVSLLALADGDDPRHPSVSRGLALTLGLVQALGDMELTAPLWCLTRGAVAVDASDGVDGAVQAQVWGLGRAVALEHPDRWGGLVDLPEYVDPRTARRLTGVLTGTGAGAGAGGLGREDQIALRATGAFGCRLTRDTVAPAGDPGEWTLSGTVLVTGGTGAVGGHVARWLAARGAERLVLVSRRGPRAPGADALRDELTAAGAQVEMLACDLSDGSAVTALVAGLAAGGDLTAVVHAAGVLDDGVLASLSVERCAEVLAAKARAAHHLDLATRDVNLDAFVLFSSVSGVLGAAGQANYAAANAHLDAVALHRHALGLPAVSVAWGPWAEGGMAGEDAAAGRLSRDGWTAMAPEPAATAMARAVAAGHPAVMIADVDWQRFAPAYAAVRPGNSLLTGVPEARQAQPQPWSADGERSAWASRLAGLPEEEQRTALLDLVRGQVASVLGHASMQTIDPARAFKEIGFDSLTAVELRNRLNAATGLALPATLVFDYPTPVALAEYVGSQVLGTSSPAVTGPLVVAAVDEPVAIIGMSCRFPGGVQSPEELWDLVVGGRDAISSFPTDRGWDVDALFDPDPEKPGKTYTRHGAFLHDAAEFDPRFFGISPREASAMDPQQRLLLETAWEAFERAGIDPAALRGSATGVFTGTNGQDYATRLRETPQGVEGYLMTGNAGSVISGRLAYTFGLEGPAMTVDTACSASLVALHLAAQALRQGECSLALAGGATVMSTPGAFVEFSRQGGLAADGRCKAFSASADGTGWGEGVGLLLLERLSDAERNGHPVLAVVRGSAVNQDGASNGLTAPNGPSQQRVIRQALANARLSASEVDVVEAHGTGTRLGDPIEAQALLATYGQDRPEDRPLWLGSVKSNLGHTQAAAGVAGIIKSVMAMRHGVLPATLHVDEPTSEVDWSAGAVELLTEARPWPEVGRPRRAAVSGFGVSGTNAHVILEQAAETGSTSEEGPAALVPTVVWPISGRDEQALRGQARRLRERLVVEPGLSAADVGLSLATTRSCFEQRAVVVGETRDELLAGLEALAEGREASGLVRGSARGSVNVGFLFSGQGSQRVGMGRELAERFPVFAGVFGEVCGLLDPLLPRPLGEVIAAGPGVLGRTVFTQPALFAVEVAAARLLLSWGVRPQVVAGHSVGEIAAAHVAGVLSLEDACALVAARGRLMEALPAGGVMVALEATEGEVAELLEAHAGAPVGVAAVNGPRAVVVSGDASPVGEIADVVRSWGRRTKRLEVSHAFHSPLMEPMLAEFTEVVSGLEFAAPQIGFVSAVTGGLVGADVVSRPEYWVEHVAQPVRFADAVRAAVDEAGVSLFVEVGPGGALSAMGPDCLDETVGDKQPVVFVPSLRADRPEPLAVTTALATAHVNGVQPDWQAVFAGTGAARVELPTYAFQRGRYWLDASVGGTGDASAVGLATLEHPLLAGVVDLAEEDRTVFTGRLSLTTHPWLADHAVFGSVLLPGTGFVELALAAGQYTGFGHLDELTVHAPLVLPARGAVHVQLVLDGVDDSGRRALTVHSRPEGVAGEQTWTRHATGALTVAEAVDPPAVSAVWPPAGAIEVELDDPYERFAAEGYAYGPAFQGLRRVWRGDGELFAEVELGAQELEAAGRFGVHPALLDAALHPLLLADGSTGQDGDTPTAGRLPFSWTGVSLRATGATTARVTLAFTDGDAVRITVADGDGGLVASVDALVTRPIAAGQLAAGRSGLFEVEWAPVSSSPAGSASWAVVGGGEAGVSAGGPGLGSYEDLAALRRAMDSGAPVPEVVFAHCGGGAEAADVVGGTHTATHAALVSLREWLADERFAGARLAIVTGGAVAVRPGDEVSDLAGAAVWGLVRSAQSEHPGQFVLVDTDGAAEPSSAAAALATGEPQVAVRGGEVFVPRLARADRTPAADSGVRWDPDKSLLVTGASGVLAGLVVRHAVAEWAVRHVVLVSRSGADGLAQELAEAGVSVQQARCDVADREAVAAVLAGIPAEHRLGGVIHTAGVLDDGVIESLTPERLAPVLRPKVDGAWWLHELTADVDLSVFAVFSSAAGVFGAAGQGNYAAANAFLDALALYRHREGLPATSLSWGLWAERSGMAGQLADAQLERLERTGVHPLSSSEGLALLDAALATGRPWLVPVGLDLGVMRAQADLGVTPLFRGLVRAPLRRAQVDKAASNAPDELRRELAVASAADRERMVLDLVRDRTAVVLGFGSRDEVGVDSGFTSMGVDSLAGVDLRNRLSSATGLRLPTTLIFDYPTPAALARYLHTHLVDDAVDQVDIRSVLAELDRLEATLAQVQAGDVGHMKIASRLQDLVGQWHGSGGATPGEDTVTDLEEATADEIFSFIDDNFGSTEVH.

Residues 1-27 are disordered; that stretch reads MSVPPPGATPSRTSRTKGLKDRPRMEN. The span at 18 to 27 shows a compositional bias: basic and acidic residues; the sequence is GLKDRPRMEN. One can recognise a Ketosynthase family 3 (KS3) 1 domain in the interval 57-483; sequence QEPVAIIGMS…GTNAHVIIEQ (427 aa). 3 module regions span residues 57–2148, 2167–3728, and 3746–5485; these read QEPV…RDTL, DEPL…GSQV, and DEPV…HTHL. Residues C230, H365, and H405 each act as for beta-ketoacyl synthase 1 activity in the active site. Residues 485-518 are disordered; the sequence is PAIEGTGLGDDAPPTAEHPEERTPADGGPAPQPV. Residues 611 to 926 enclose the Malonyl-CoA:ACP transacylase (MAT) 1 domain; sequence FVFPGQGSQW…LRSLAEAYAH (316 aa). Residues 976–1109 are N-terminal hotdog fold 1; the sequence is HPLLAAATSL…GYLAVGAHEP (134 aa). Residues 976–1264 form the PKS/mFAS DH 1 domain; the sequence is HPLLAAATSL…LRPLATNQAP (289 aa). H1008 serves as the catalytic Proton acceptor; for dehydratase activity 1. The segment at 1122–1264 is C-terminal hotdog fold 1; it reads ATPLDVTDLY…LRPLATNQAP (143 aa). D1183 serves as the catalytic Proton donor; for dehydratase activity 1. In terms of domain architecture, Enoyl reductase (ER) spans 1478–1777; it reads GTLDHLTLIP…QARHIGKIVL (300 aa). Residues 1787–1966 form the Ketoreductase (KR) 1 domain; sequence GTVLVTGATG…TSLAWGLWEE (180 aa). In terms of domain architecture, Carrier 1 spans 2073–2148; the sequence is RIVNDLVRDH…ELAAHLRDTL (76 aa). S2108 is subject to O-(pantetheine 4'-phosphoryl)serine. Positions 2167 to 2593 constitute a Ketosynthase family 3 (KS3) 2 domain; that stretch reads DEPLAVVAMS…GTNAHVILEQ (427 aa). Active-site for beta-ketoacyl synthase 2 activity residues include C2340, H2475, and H2515. The region spanning 2710 to 3016 is the Malonyl-CoA:ACP transacylase (MAT) 2 domain; that stretch reads VFSGQGSQRP…AAVALQRGNR (307 aa). The Ketoreductase (KR) 2 domain occupies 3373–3551; that stretch reads GTVLVTGGTG…VSVAWGPWAE (179 aa). The Carrier 2 domain maps to 3653-3728; sequence TALLDLVRGQ…ALAEYVGSQV (76 aa). S3688 carries the post-translational modification O-(pantetheine 4'-phosphoryl)serine. The 427-residue stretch at 3746–4172 folds into the Ketosynthase family 3 (KS3) 3 domain; it reads DEPVAIIGMS…GTNAHVILEQ (427 aa). Active-site for beta-ketoacyl synthase 3 activity residues include C3919, H4054, and H4094. Positions 4279-4601 constitute a Malonyl-CoA:ACP transacylase (MAT) 3 domain; the sequence is FLFSGQGSQR…ATAHVNGVQP (323 aa). Residues 4649 to 4774 form an N-terminal hotdog fold 2 region; it reads HPLLAGVVDL…GALTVAEAVD (126 aa). In terms of domain architecture, PKS/mFAS DH 2 spans 4649-4931; it reads HPLLAGVVDL…TRPIAAGQLA (283 aa). H4681 acts as the Proton acceptor; for dehydratase activity 2 in catalysis. Residues 4787–4931 are C-terminal hotdog fold 2; sequence AIEVELDDPY…TRPIAAGQLA (145 aa). D4848 serves as the catalytic Proton donor; for dehydratase activity 2. The Ketoreductase (KR) 3 domain occupies 5134-5306; that stretch reads LLVTGASGVL…TSLSWGLWAE (173 aa). A Carrier 3 domain is found at 5410-5485; it reads RMVLDLVRDR…ALARYLHTHL (76 aa). Residue S5445 is modified to O-(pantetheine 4'-phosphoryl)serine.

Pantetheine 4'-phosphate is required as a cofactor.

It participates in antibiotic biosynthesis. Its function is as follows. Second protein in the synthesis of the 16-membered macrolide antibiotics FD-891 and FD-892. Composed of 3 modules. Modifies the product of GfsA by multiple rounds of addition of malonyl-CoA or methylmalonyl-CoA and other modifications to help generate the final products. The polypeptide is Polyketide synthase GfsB (Streptomyces halstedii).